We begin with the raw amino-acid sequence, 181 residues long: Isopentenyl-diphosphate Delta-isomerase (181 aa).

Residues His25 and His32 each coordinate Mn(2+). The Nudix hydrolase domain maps to 30–164 (LLHLAFSCWL…PWAFSPWMVL (135 aa)). The active site involves Cys67. Residue His69 participates in Mn(2+) binding. Glu87 contacts Mg(2+). Residues Glu114 and Glu116 each contribute to the Mn(2+) site. Residue Glu116 is part of the active site.

The protein belongs to the IPP isomerase type 1 family. As to quaternary structure, homodimer. Requires Mg(2+) as cofactor. It depends on Mn(2+) as a cofactor.

Its subcellular location is the cytoplasm. It catalyses the reaction isopentenyl diphosphate = dimethylallyl diphosphate. The protein operates within isoprenoid biosynthesis; dimethylallyl diphosphate biosynthesis; dimethylallyl diphosphate from isopentenyl diphosphate: step 1/1. In terms of biological role, catalyzes the 1,3-allylic rearrangement of the homoallylic substrate isopentenyl (IPP) to its highly electrophilic allylic isomer, dimethylallyl diphosphate (DMAPP). This Citrobacter koseri (strain ATCC BAA-895 / CDC 4225-83 / SGSC4696) protein is Isopentenyl-diphosphate Delta-isomerase.